We begin with the raw amino-acid sequence, 368 residues long: Cytochrome b (368 aa).

Transmembrane regions (helical) follow at residues Phe-32–Phe-52, Trp-76–Thr-98, Ala-112–Val-132, and Phe-174–Phe-194. Heme b is bound by residues His-82 and His-96. Heme b is bound by residues His-178 and His-192. His-197 is a binding site for a ubiquinone. The next 4 membrane-spanning stretches (helical) occupy residues Met-219–Ala-239, Gly-285–Leu-305, Gly-323–Pro-343, and Tyr-347–Leu-367.

The protein belongs to the cytochrome b family. As to quaternary structure, the main subunits of complex b-c1 are: cytochrome b, cytochrome c1 and the Rieske protein. Heme b is required as a cofactor.

The protein localises to the mitochondrion inner membrane. Component of the ubiquinol-cytochrome c reductase complex (complex III or cytochrome b-c1 complex) that is part of the mitochondrial respiratory chain. The b-c1 complex mediates electron transfer from ubiquinol to cytochrome c. Contributes to the generation of a proton gradient across the mitochondrial membrane that is then used for ATP synthesis. The sequence is that of Cytochrome b (MT-CYB) from Toxoplasma gondii.